The following is a 1629-amino-acid chain: Ferredoxin-dependent glutamate synthase 2, chloroplastic (1629 aa).

The N-terminal 107 residues, 1–107 (MALQSPGATG…LEDIISERGA (107 aa)), are a transit peptide targeting the chloroplast. C108 functions as the For GATase activity in the catalytic mechanism. The Glutamine amidotransferase type-2 domain occupies 108–507 (CGVGFIANLE…PGMMISVDLE (400 aa)). 1186-1243 (LAETQKTLIGNGLRERVIIRVDGGFKSGVDVLIAAAMGADEYGFGTLAMIATGCIMAR) provides a ligand contact to FMN. C1239, C1245, and C1250 together coordinate [3Fe-4S] cluster. The disordered stretch occupies residues 1599-1629 (SEEDTPEANSDHILKTTTGDEEQVSSTLAEK).

It belongs to the glutamate synthase family. It depends on [3Fe-4S] cluster as a cofactor. The cofactor is FAD. Requires FMN as cofactor. Expressed predominantly in roots and slightly in leaves. Low expression in the leaf mesophyll and phloem companion cell-sieve element complex.

The protein resides in the plastid. It localises to the chloroplast stroma. It catalyses the reaction 2 oxidized [2Fe-2S]-[ferredoxin] + 2 L-glutamate = L-glutamine + 2 reduced [2Fe-2S]-[ferredoxin] + 2-oxoglutarate + 2 H(+). It functions in the pathway amino-acid biosynthesis; L-glutamate biosynthesis via GLT pathway; L-glutamate from 2-oxoglutarate and L-glutamine (ferredoxin route): step 1/1. Its pathway is energy metabolism; nitrogen metabolism. In terms of biological role, may play a role in primary nitrogen assimilation in roots. Could supply a constitutive level of glutamate to maintain a basal level of protein synthesis. The protein is Ferredoxin-dependent glutamate synthase 2, chloroplastic (GLU2) of Arabidopsis thaliana (Mouse-ear cress).